The primary structure comprises 163 residues: NADH-quinone oxidoreductase subunit 9 (163 aa).

4Fe-4S ferredoxin-type domains are found at residues 54–84 (LRRY…IDAE) and 94–123 (TRYD…EGPN). 8 residues coordinate [4Fe-4S] cluster: Cys-64, Cys-67, Cys-70, Cys-74, Cys-103, Cys-106, Cys-109, and Cys-113.

Belongs to the complex I 23 kDa subunit family. As to quaternary structure, NDH-1 is composed of at least 14 different subunits, Nqo1 to Nqo14. The complex has a L-shaped structure, with the hydrophobic arm (subunits Nqo7, Nqo8, Nqo10 to Nqo14) embedded in the inner membrane and the hydrophilic peripheral arm (subunits Nqo1 to Nqo6, Nqo9) protruding into the bacterial cytoplasm. The hydrophilic domain contains all the redox centers. [4Fe-4S] cluster serves as cofactor.

It is found in the cell inner membrane. It catalyses the reaction a quinone + NADH + 5 H(+)(in) = a quinol + NAD(+) + 4 H(+)(out). Functionally, NDH-1 shuttles electrons from NADH, via FMN and iron-sulfur (Fe-S) centers, to quinones in the respiratory chain. The immediate electron acceptor for the enzyme in this species is believed to be ubiquinone. Couples the redox reaction to proton translocation (for every two electrons transferred, four hydrogen ions are translocated across the cytoplasmic membrane), and thus conserves the redox energy in a proton gradient. This chain is NADH-quinone oxidoreductase subunit 9, found in Paracoccus denitrificans.